A 284-amino-acid polypeptide reads, in one-letter code: Trimeric intracellular cation channel type B-A (284 aa).

Over 1–15 the chain is Lumenal; the sequence is MESLSELSVQFSQLS. A helical membrane pass occupies residues 16–33; sequence MFPFFDMAHYVVSVMSAR. The Cytoplasmic segment spans residues 34 to 46; that stretch reads EQAGALDIAARSP. The chain crosses the membrane as a helical span at residues 47-68; it reads MASWFSAMLYCFGGGILSSILL. The Lumenal portion of the chain corresponds to 69-79; the sequence is AEPPIAVLSNT. A helical membrane pass occupies residues 80-99; sequence TNIMLASTIWYMVYYFPYDL. Residues 100 to 102 are Cytoplasmic-facing; that stretch reads FYN. Residues 103–121 form a helical membrane-spanning segment; it reads CFFFLPIRLIIAGMKEVTR. Positions 117 and 121 each coordinate a 1,2-diacyl-sn-glycero-3-phospho-(1D-myo-inositol-4,5-bisphosphate). The Lumenal segment spans residues 122–137; sequence TWKILSGVTHAHSHYK. A helical transmembrane segment spans residues 138–155; sequence DALLVMITIGWARGAGGG. Residues 156–177 are Cytoplasmic-facing; that stretch reads LISNFEQLVRGVWKPESNEFLK. Residues 178 to 195 form a helical membrane-spanning segment; sequence MSYPVKVTLIGAVLFTLQ. Residues 196-206 lie on the Lumenal side of the membrane; it reads HGHYLPISRHN. A helical membrane pass occupies residues 207–224; sequence LMLIYTMFLVLIKVTMML. The Cytoplasmic segment spans residues 225–284; the sequence is THSTASPFLPLETPLQRILFGQRQKPSEVRQSASSSGAKGKPSKKTLDKDSGEQSKKKDS. The tract at residues 246 to 284 is disordered; that stretch reads QRQKPSEVRQSASSSGAKGKPSKKTLDKDSGEQSKKKDS. Positions 269-284 are enriched in basic and acidic residues; the sequence is KTLDKDSGEQSKKKDS.

The protein belongs to the TMEM38 family. In terms of assembly, homotrimer; conformation seems to be controled by binding to diacylglycerol (DAG).

It is found in the endoplasmic reticulum membrane. The enzyme catalyses K(+)(in) = K(+)(out). Channel activity is activated by increased cytosolic Ca(2+) levels and blocked by luminal high Ca(2+) levels. Functionally, intracellular monovalent cation channel required for maintenance of rapid intracellular calcium release. Acts as a potassium counter-ion channel that functions in synchronization with calcium release from intracellular stores. Activated by increased cytosolic Ca(2+) levels. This chain is Trimeric intracellular cation channel type B-A (tmem38b-a), found in Xenopus laevis (African clawed frog).